A 237-amino-acid chain; its full sequence is Ribonuclease PH (237 aa).

Residues Arg86 and 124-126 contribute to the phosphate site; that span reads GTR.

It belongs to the RNase PH family. In terms of assembly, homohexameric ring arranged as a trimer of dimers.

The enzyme catalyses tRNA(n+1) + phosphate = tRNA(n) + a ribonucleoside 5'-diphosphate. Its function is as follows. Phosphorolytic 3'-5' exoribonuclease that plays an important role in tRNA 3'-end maturation. Removes nucleotide residues following the 3'-CCA terminus of tRNAs; can also add nucleotides to the ends of RNA molecules by using nucleoside diphosphates as substrates, but this may not be physiologically important. Probably plays a role in initiation of 16S rRNA degradation (leading to ribosome degradation) during starvation. The chain is Ribonuclease PH from Rhodopseudomonas palustris (strain HaA2).